A 565-amino-acid polypeptide reads, in one-letter code: Sodium/hydrogen exchanger 9B1 (565 aa).

Composition is skewed to basic and acidic residues over residues 1–14 (MSEH…KDDG) and 23–86 (MSKD…ETQT). The interval 1 to 112 (MSEHDVESNK…RGTNSYCPPQ (112 aa)) is disordered. 13 helical membrane passes run 122-142 (GAAL…EVLP), 146-166 (LFGL…LEFI), 167-187 (KIPV…GFTI), 206-223 (ALRN…GLGL), 238-258 (LSFG…HFIM), 266-286 (FLLG…NMLM), 311-331 (IVAI…GSVI), 341-361 (VLIG…FPSG), 371-391 (AFLV…IGLH), 419-439 (IVAN…GTEV), 449-469 (IGMC…STFV), 482-502 (VFIA…GPLA), and 523-543 (VAFL…GILG).

The protein belongs to the monovalent cation:proton antiporter 1 (CPA1) transporter (TC 2.A.36) family. As to expression, testis-specific. Expressed in the spermatids and spermatozoa (at protein level). Specifically present in the principal piece of sperm tail (at protein level).

It localises to the cell projection. Its subcellular location is the cilium. It is found in the flagellum membrane. Functionally, sperm-specific Na(+)/H(+) exchanger involved in intracellular pH regulation of spermatozoa. Involved in sperm motility and fertility. The sequence is that of Sodium/hydrogen exchanger 9B1 from Mus musculus (Mouse).